A 677-amino-acid chain; its full sequence is uncharacterized protein (677 aa).

Transmembrane regions (helical) follow at residues 80–102 (ILSL…RASF), 338–360 (ALLS…LFGF), and 367–386 (LVAM…LLSL). The disordered stretch occupies residues 523-556 (DEAASLPSDSSPEEDLDPLEEVESIEGTAEESTR). Acidic residues predominate over residues 533–546 (SPEEDLDPLEEVES).

It is found in the cell membrane. This is an uncharacterized protein from Treponema pallidum (strain Nichols).